The following is a 240-amino-acid chain: Uridylate kinase (240 aa).

13–16 (KASG) contacts ATP. The involved in allosteric activation by GTP stretch occupies residues 21–26 (GGQGFG). Position 55 (Gly-55) interacts with UMP. ATP is bound by residues Gly-56 and Arg-60. Residues Asp-75 and 136-143 (TGNPFFTT) contribute to the UMP site. ATP contacts are provided by Thr-163, Gln-164, Tyr-169, and Asp-172.

Belongs to the UMP kinase family. In terms of assembly, homohexamer.

The protein localises to the cytoplasm. It catalyses the reaction UMP + ATP = UDP + ADP. Its pathway is pyrimidine metabolism; CTP biosynthesis via de novo pathway; UDP from UMP (UMPK route): step 1/1. Allosterically activated by GTP. Inhibited by UTP. Its function is as follows. Catalyzes the reversible phosphorylation of UMP to UDP. This Rhizobium johnstonii (strain DSM 114642 / LMG 32736 / 3841) (Rhizobium leguminosarum bv. viciae) protein is Uridylate kinase.